Consider the following 770-residue polypeptide: ARF GTPase-activating protein GIT1 (770 aa).

Positions 1 to 124 constitute an Arf-GAP domain; that stretch reads MSRKGPRAEV…AFVHKLPCRD (124 aa). Positions 1 to 124 are interaction with gamma-tubulin and localization to the centrosome; the sequence is MSRKGPRAEV…AFVHKLPCRD (124 aa). The C4-type zinc-finger motif lies at 11 to 34; it reads CADCSAPDPGWASISRGVLVCDEC. ANK repeat units follow at residues 132–161, 166–195, and 199–228; these read DLSK…QANF, KGTT…DPGS, and NGRT…ELTD. At tyrosine 224 the chain carries Phosphotyrosine. The segment at 245–374 is interaction with PCLO; it reads HYIIPQMADR…QGKSLSSPTD (130 aa). Positions 253 to 424 are interaction with PTK2/FAK1; sequence DRSRQKCMSQ…NRARSMDSSD (172 aa). Residues 254–376 are interaction with ARHGEF7; sequence RSRQKCMSQS…KSLSSPTDNL (123 aa). The tract at residues 363–425 is disordered; that stretch reads RQQGKSLSSP…RARSMDSSDL (63 aa). The span at 366–383 shows a compositional bias: polar residues; the sequence is GKSLSSPTDNLELSARNQ. Phosphoserine is present on residues serine 368 and serine 371. Threonine 373 bears the Phosphothreonine mark. Positions 375–596 are interaction with NCK2 and GRIN3A; sequence NLELSARNQS…QEGSRHASKL (222 aa). Positions 375–596 are required for localization at synapses; that stretch reads NLELSARNQS…QEGSRHASKL (222 aa). 2 positions are modified to phosphoserine: serine 379 and serine 384. Tyrosine 392 is modified (phosphotyrosine). Serine 394 and serine 397 each carry phosphoserine. The segment covering 394 to 403 has biased composition (acidic residues); the sequence is SVASDEDTDQ. The residue at position 401 (threonine 401) is a Phosphothreonine. Serine 419, serine 422, and serine 426 each carry phosphoserine. Positions 420-475 are interaction with MAPK1; sequence MDSSDLSDGAVTLQEYLELKKALATSEAKVQQLMKVNSSLSDELRKLQREIHKLQA. An interaction with IKBKG region spans residues 429 to 629; it reads AVTLQEYLEL…EGKRFLELSK (201 aa). The stretch at 449–483 forms a coiled coil; that stretch reads VQQLMKVNSSLSDELRKLQREIHKLQAENLQLRQP. A phosphoserine mark is found at serine 507 and serine 545. Threonine 546 carries the post-translational modification Phosphothreonine. 2 positions are modified to phosphotyrosine: tyrosine 554 and tyrosine 563. Serine 570, serine 580, serine 601, and serine 605 each carry phosphoserine. Residues 574–586 show a composition bias toward low complexity; sequence VTFTPSSPLLSSS. Residues 574 to 615 form a disordered region; that stretch reads VTFTPSSPLLSSSQEGSRHASKLSRHGSGAESDYENTQSGEP. Threonine 610 carries the post-translational modification Phosphothreonine. Phosphoserine is present on serine 639. An interaction with PXN and TGFB1I1 region spans residues 646–770; the sequence is PGLPSTEDVI…VTITTREKKQ (125 aa).

Forms homodimers and possibly oligomers. May form heterooligomers with GIT2. Interacts with G protein-coupled receptor kinases, including GRK2, GRK3, GRK5 and GRK6. Interacts with PPFIA1, PPFIA2 and PPFIA4. Interacts with GRIP1 and forms a ternary complex with PPFIA1 and GRIP1. Directly interacts with ARHGEF7/beta-PIX, forming in vitro a heptameric complex made of a GIT1 dimer and an ARHGEF7 trimer. Directly interacts with PXN/paxillin; this interaction is enhanced in the presence of ARHGEF7. Directly interacts (via C-terminus) with TGFB1I1/Hic-5 (via LD motif 3). Directly interacts with PTK2/FAK1. May interact with PTK2B/PYK2; this interaction may be indirect. Interacts with AMPA receptors GRIA2/3. Directly interacts with protein Piccolo/PCLO. Forms a complex with Ephrin-B1/EFNB1 and NCK2/GRB4 (via SH2); this interaction is important for spine morphogenesis and synapse formation. Interaction with NCK2 is transient and depends upon GIT1 phosphorylation at Tyr-392. Interacts with GRIN3A/GluN3A (via C-terminus); this interaction competes with GIT1 interaction with ARHGEF7 and limits synaptic localization of GIT1. Interacts with IKBKG/NEMO in resting bone mesenchymal stem cells, as well as in TNF-stimulated cells; this interaction may increase IKBKG affinity for 'Lys-63'-linked polyubiquitin chains. Interacts with GABA(A) receptors, including GABRB3 and GABRG2. Interacts with SCRIB. Interacts (via N- and C-terminus) with ENTR1/SDCCAG3 (via N-terminus); this interaction is direct. May form a tripartite complex with ENTR1 and PTPN13. Interacts with YWHAZ. Interacts with PAK1 and PAK3. Directly interacts (via N-terminus) with gamma-tubulin. Interacts with MAPK1 and MAPK3; this interaction is required for MAPK1/3 recruitment to focal adhesions. Post-translationally, phosphorylated on tyrosine residues by PTK2/FAK1 and SRC in growing fibroblasts. Phosphorylation at Tyr-392 is induced by activation of Ephrin-B1/EFNB1 and catalyzed by SRC family kinases. It is required for the interaction with NCK2 and for GIT1 recruitment to synapses in hippocampal neurons. As to expression, widely expressed. Expressed at high levels in testis (at protein level). Expressed in the brain, including in CA1 hippocampal neurons, in the amygdala, and thalamic nuclei (at protein level).

It localises to the cytoplasm. It is found in the synapse. The protein localises to the presynapse. Its subcellular location is the postsynapse. The protein resides in the postsynaptic density. It localises to the cell junction. It is found in the focal adhesion. The protein localises to the cell projection. Its subcellular location is the lamellipodium. The protein resides in the cytoskeleton. It localises to the microtubule organizing center. It is found in the centrosome. The protein localises to the spindle pole. Its function is as follows. GTPase-activating protein for ADP ribosylation factor family members, including ARF1. Multidomain scaffold protein that interacts with numerous proteins and therefore participates in many cellular functions, including receptor internalization, focal adhesion remodeling, and signaling by both G protein-coupled receptors and tyrosine kinase receptors. Through PAK1 activation, positively regulates microtubule nucleation during interphase. Plays a role in the regulation of cytokinesis; for this function, may act in a pathway also involving ENTR1 and PTPN13. May promote cell motility both by regulating focal complex dynamics and by the activation of RAC1. May act as scaffold for MAPK1/3 signal transduction, recruiting MAPK1/3 to focal adhesions after EGF stimulation via a Src-dependent pathway, hence stimulating cell migration. Plays a role in brain development and function. Involved in the regulation of spine density and synaptic plasticity that is required for processes involved in learning. Plays an important role in dendritic spine morphogenesis and synapse formation. In hippocampal neurons, recruits guanine nucleotide exchange factors (GEFs), such as ARHGEF7/beta-PIX, to the synaptic membrane. These in turn locally activate RAC1, which is an essential step for spine morphogenesis and synapse formation. May contribute to the organization of presynaptic active zones through oligomerization and formation of a Piccolo/PCLO-based protein network, which includes ARHGEF7/beta-PIX and FAK1. In neurons, through its interaction with liprin-alpha family members, may be required for AMPA receptor (GRIA2/3) proper targeting to the cell membrane. In complex with GABA(A) receptors and ARHGEF7, plays a crucial role in regulating GABA(A) receptor synaptic stability, maintaining GPHN/gephyrin scaffolds and hence GABAergic inhibitory synaptic transmission, by locally coordinating RAC1 and PAK1 downstream effector activity, leading to F-actin stabilization. May also be important for RAC1 downstream signaling pathway through PAK3 and regulation of neuronal inhibitory transmission at presynaptic input. Required for successful bone regeneration during fracture healing. The function in intramembranous ossification may, at least partly, exerted by macrophages in which GIT1 is a key negative regulator of redox homeostasis, IL1B production, and glycolysis, acting through the ERK1/2/NRF2/NFE2L2 axis. May also play a role in angiogenesis during fracture healing. In this process, may regulate activation of the canonical NF-kappa-B signal in bone mesenchymal stem cells by enhancing the interaction between NEMO and 'Lys-63'-ubiquitinated RIPK1/RIP1, eventually leading to enhanced production of VEGFA and others angiogenic factors. Essential for VEGF signaling through the activation of phospholipase C-gamma and ERK1/2, hence may control endothelial cell proliferation and angiogenesis. The protein is ARF GTPase-activating protein GIT1 of Rattus norvegicus (Rat).